The following is a 459-amino-acid chain: Interleukin-7 receptor subunit alpha (459 aa).

The N-terminal stretch at 1-20 (MTILGTTFGVFFSLLQVVSG) is a signal peptide. At 21-241 (ESGYAQNGDL…NNHSGETNPT (221 aa)) the chain is on the extracellular side. Cysteine 42 and cysteine 57 are oxidised to a cystine. N-linked (GlcNAc...) asparagine glycans are attached at residues asparagine 49 and asparagine 65. Disulfide bonds link cysteine 74–cysteine 82 and cysteine 108–cysteine 118. The region spanning 131–231 (APFDLSVIYR…PSYYFRTPEI (101 aa)) is the Fibronectin type-III domain. Asparagine 182 carries N-linked (GlcNAc...) asparagine glycosylation. The WSXWS motif motif lies at 217–221 (WSEWS). Residues 242 to 262 (LLTISILSVLSVVLLVILACV) traverse the membrane as a helical segment. Residues 263 to 459 (LWKKRIKPII…VTMSSFCQKR (197 aa)) lie on the Cytoplasmic side of the membrane. The short motif at 272–280 (IWPSLPDHK) is the Box 1 motif element. Threonine 282 carries the phosphothreonine; by PKC modification. Positions 327-357 (TVPPQLEESETQRPGGDVQSPSWPSENVVTT) are disordered. Over residues 345–357 (QSPSWPSENVVTT) the composition is skewed to polar residues.

Belongs to the type I cytokine receptor family. Type 4 subfamily. As to quaternary structure, the IL7 receptor is a heterodimer of IL7R and IL2RG. The TSLP receptor is a heterodimer of CRLF2 and IL7R. Interacts with CD53. N-glycosylated IL-7Ralpha binds IL7 300-fold more tightly than the unglycosylated form. Post-translationally, ubiquitinated by MARCHF8; leading to lysosomal degradation.

The protein resides in the cell membrane. Receptor for interleukin-7. Also acts as a receptor for thymic stromal lymphopoietin (TSLP). The chain is Interleukin-7 receptor subunit alpha (IL7R) from Callithrix jacchus (White-tufted-ear marmoset).